Here is a 272-residue protein sequence, read N- to C-terminus: Indole-3-glycerol phosphate synthase (272 aa).

Belongs to the TrpC family.

It carries out the reaction 1-(2-carboxyphenylamino)-1-deoxy-D-ribulose 5-phosphate + H(+) = (1S,2R)-1-C-(indol-3-yl)glycerol 3-phosphate + CO2 + H2O. It participates in amino-acid biosynthesis; L-tryptophan biosynthesis; L-tryptophan from chorismate: step 4/5. The polypeptide is Indole-3-glycerol phosphate synthase (Mycolicibacterium smegmatis (strain ATCC 700084 / mc(2)155) (Mycobacterium smegmatis)).